A 327-amino-acid polypeptide reads, in one-letter code: Phenylalanine--tRNA ligase alpha subunit (327 aa).

E252 contributes to the Mg(2+) binding site.

This sequence belongs to the class-II aminoacyl-tRNA synthetase family. Phe-tRNA synthetase alpha subunit type 1 subfamily. In terms of assembly, tetramer of two alpha and two beta subunits. Mg(2+) serves as cofactor.

It localises to the cytoplasm. It catalyses the reaction tRNA(Phe) + L-phenylalanine + ATP = L-phenylalanyl-tRNA(Phe) + AMP + diphosphate + H(+). The protein is Phenylalanine--tRNA ligase alpha subunit of Shigella sonnei (strain Ss046).